The following is a 298-amino-acid chain: Protease HtpX homolog (298 aa).

2 consecutive transmembrane segments (helical) span residues valine 14–leucine 34 and tyrosine 39–phenylalanine 59. Residue histidine 143 coordinates Zn(2+). The active site involves glutamate 144. Histidine 147 serves as a coordination point for Zn(2+). The next 2 helical transmembrane spans lie at isoleucine 158 to tryptophan 178 and isoleucine 197 to isoleucine 217. Glutamate 226 is a binding site for Zn(2+).

This sequence belongs to the peptidase M48B family. Zn(2+) is required as a cofactor.

Its subcellular location is the cell membrane. This chain is Protease HtpX homolog, found in Streptococcus pyogenes serotype M1.